Consider the following 336-residue polypeptide: Potassium channel subfamily K member 1 (336 aa).

The Cytoplasmic portion of the chain corresponds to 1-20; sequence MLQSLAGSSCVRLVERHRSA. The helical transmembrane segment at 21–41 threads the bilayer; it reads WCFGFLVLGYLLYLVFGAVVF. The Extracellular segment spans residues 42-103; it reads SSVELPYEDL…SNASGNWNWD (62 aa). Asn95 is a glycosylation site (N-linked (GlcNAc...) asparagine). The segment at residues 104 to 116 is an intramembrane region (helical); sequence FTSALFFASTVLS. Residues 117–122 lie within the membrane without spanning it; it reads TTGYGH. The selectivity filter 1 stretch occupies residues 117-122; the sequence is TTGYGH. The Extracellular portion of the chain corresponds to 123 to 132; sequence TVPLSDGGKA. The chain crosses the membrane as a helical span at residues 133 to 156; that stretch reads FCIIYSVIGIPFTLLFLTAVVQRI. Over 157-181 the chain is Cytoplasmic; sequence TVHVTRRPVLYFHIRWGFSKQVVAI. The chain crosses the membrane as a helical span at residues 182 to 202; that stretch reads VHAVLLGFVTVSCFFFIPAAV. Residues 203–211 lie on the Extracellular side of the membrane; sequence FSVLEDDWN. The helical intramembrane region spans 212-224; sequence FLESFYFCFISLS. The interval 225–230 is selectivity filter 2; the sequence is TIGLGD. Residues 225–231 lie within the membrane without spanning it; sequence TIGLGDY. The Extracellular portion of the chain corresponds to 232–243; sequence VPGEGYNQKFRE. The helical transmembrane segment at 244–267 threads the bilayer; the sequence is LYKIGITCYLLLGLIAMLVVLETF. Over 268-336 the chain is Cytoplasmic; the sequence is CELHELKKFR…SACVDGPANH (69 aa). Lys274 participates in a covalent cross-link: Glycyl lysine isopeptide (Lys-Gly) (interchain with G-Cter in SUMO). Residues 293–299 form an important for intracellular retention in recycling endosomes region; sequence IIEHDQL. At Ser326 the chain carries Phosphoserine.

Belongs to the two pore domain potassium channel (TC 1.A.1.8) family. Homodimer; disulfide-linked. Heterodimer with KCNK2; disulfide-linked. In astrocytes, forms mostly heterodimeric potassium channels with KCNK2, with only a minor proportion of functional channels containing homodimeric KCNK1. Interacts with KCNK3 and KCNK9, forming functional heterodimeric channels. Interacts with GNG4. Identified in a complex with PSD and ARF6; interacts only with PSD that is bound to ARF6. Interacts with UBE2I. Post-translationally, sumoylation is controversial. Sumoylated by UBE2I. Not sumoylated when expressed in xenopus oocytes or mammalian cells. Sumoylation inactivates the channel, but does not interfere with expression at the cell membrane. Sumoylation of a single subunit is sufficient to silence the dimeric channel. Sumoylation of KCNK1 is sufficient to silence heterodimeric channels formed by KCNK1 and KCNK3 or KCNK9. Desumoylated by SENP1; this activates the channel. Desumoylated by SENP1; this strongly increases halothane-mediated activation of heterodimeric channels formed with KCNK9. SENP1 treatment has no effect. Detected in bronchial epithelial cells. Detected in heart left atrium and left ventricle. Detected in cardiac myocytes (at protein level). Widely expressed with high levels in heart, brain and kidney, and lower levels in colon, ovary, placenta, lung and liver. Highly expressed in cerebellum, and detected at lower levels in amygdala, caudate nucleus, brain cortex, hippocampus, putamen, substantia nigra, thalamus, dorsal root ganglion, spinal cord, pituitary, heart, kidney, lung, placenta, pancreas, stomach, small intestine, uterus and prostate. Detected in right and left heart ventricle and atrium, and in heart Purkinje fibers.

It is found in the cell membrane. The protein resides in the recycling endosome. It localises to the synaptic cell membrane. The protein localises to the cytoplasmic vesicle. Its subcellular location is the perikaryon. It is found in the cell projection. The protein resides in the dendrite. It localises to the apical cell membrane. It carries out the reaction K(+)(in) = K(+)(out). It catalyses the reaction NH4(+)(in) = NH4(+)(out). The catalysed reaction is Na(+)(in) = Na(+)(out). The enzyme catalyses Rb(+)(in) = Rb(+)(out). It carries out the reaction Cs(+)(in) = Cs(+)(out). It catalyses the reaction Li(+)(in) = Li(+)(out). The catalysed reaction is L-glutamate(out) = L-glutamate(in). The enzyme catalyses chloride(in) = chloride(out). Inhibited by Ba(2+) ions and quinidine. Inhibited by quinine. Is slightly inhibited by 10 mM tetraethylammonium (TEA), and only marginally inhibited by 4-aminopyridine, charybdotoxin and dendrotoxin. Lowering the extracellular pH to below 6.5 transiently activates the channel, and then inhibits channel activity. Inhibited when the intracellular pH is decreased down to pH 6.0, but this may be due to indirect effects. Functionally, ion channel that contributes to passive transmembrane potassium transport and to the regulation of the resting membrane potential in brain astrocytes, but also in kidney and in other tissues. Forms dimeric channels through which potassium ions pass in accordance with their electrochemical gradient. The channel is selective for K(+) ions at physiological potassium concentrations and at neutral pH, but becomes permeable to Na(+) at subphysiological K(+) levels and upon acidification of the extracellular medium. The homodimer has very low potassium channel activity, when expressed in heterologous systems, and can function as weakly inward rectifying potassium channel. Channel activity is modulated by activation of serotonin receptors. Heterodimeric channels containing KCNK1 and KCNK2 have much higher activity, and may represent the predominant form in astrocytes. Heterodimeric channels containing KCNK1 and KCNK3 or KCNK9 have much higher activity. Heterodimeric channels formed by KCNK1 and KCNK9 may contribute to halothane-sensitive currents. Mediates outward rectifying potassium currents in dentate gyrus granule cells and contributes to the regulation of their resting membrane potential. Contributes to the regulation of action potential firing in dentate gyrus granule cells and down-regulates their intrinsic excitability. In astrocytes, the heterodimer formed by KCNK1 and KCNK2 is required for rapid glutamate release in response to activation of G-protein coupled receptors, such as F2R and CNR1. Required for normal ion and water transport in the kidney. Contributes to the regulation of the resting membrane potential of pancreatic beta cells. The low channel activity of homodimeric KCNK1 may be due to sumoylation. The low channel activity may be due to rapid internalization from the cell membrane and retention in recycling endosomes. Permeable to monovalent cations with ion selectivity for K(+) &gt; Rb(+) &gt;&gt; NH4(+) &gt;&gt; Cs(+) = Na(+) = Li(+). The sequence is that of Potassium channel subfamily K member 1 (KCNK1) from Homo sapiens (Human).